The chain runs to 421 residues: Immunoglobulin heavy constant epsilon (421 aa).

Ig-like domains are found at residues Pro-5–Thr-97, Pro-99–Ser-184, Pro-201–Thr-301, and Pro-310–Ser-410. A disulfide bridge connects residues Cys-23 and Cys-75. N-linked (GlcNAc...) asparagine glycans are attached at residues Asn-43, Asn-72, Asn-84, Asn-95, Asn-166, Asn-238, Asn-261, Asn-365, and Asn-415. 3 disulfides stabilise this stretch: Cys-121–Cys-180, Cys-226–Cys-285, and Cys-330–Cys-392.

The basic structural unit consists of two identical heavy chains and two identical light chains; disulfide-linked. N-terminal variable regions of the heavy and light chains form the antigen binding sites, whereas the C-terminal constant regions of the heavy chains interact with immune receptors to mediate effector functions.

It is found in the secreted. Its subcellular location is the cell membrane. Functionally, constant region of immunoglobulin heavy chains. Immunoglobulins, also known as antibodies, are membrane-bound or secreted glycoproteins produced by B lymphocytes. In the recognition phase of humoral immunity, the membrane-bound immunoglobulins serve as receptors which, upon binding of a specific antigen, trigger the clonal expansion and differentiation of B lymphocytes into immunoglobulins-secreting plasma cells. Secreted immunoglobulins mediate the effector phase of humoral immunity, which results in the elimination of bound antigens. The antigen binding site is formed by the variable domain of one heavy chain, together with that of its associated light chain. Thus, each immunoglobulin has two antigen binding sites with remarkable affinity for a particular antigen. The variable domains are assembled by a process called V-(D)-J rearrangement and can then be subjected to somatic hypermutations which, after exposure to antigen and selection, allow affinity maturation for a particular antigen. This is Immunoglobulin heavy constant epsilon from Mus musculus (Mouse).